The sequence spans 258 residues: MKITKIEKKKRLYLVEIDKKESLYVTEDTIVKYMLTKEKALSKDQLEDIKNFAQFSHGKNLALYFISFKQRTEKEVRDYLFKHEINPHIIPQIIDNLKKDHWIDDYKLLESLAQQNLNSGDKGAYALKQKWLQKGCEKQVIDEVLTQFDFSEVAIKVTSKLLRKYQGKLPTKSLKDKLIQNLINKGFSFQESKNAINQLELEADEENEQALLYKEIEKQYQKFSKKYDGYELKQHLTQSLFRKGYDFDAIASALREYF.

The protein belongs to the RecX family.

Its subcellular location is the cytoplasm. In terms of biological role, modulates RecA activity. The protein is Regulatory protein RecX of Streptococcus thermophilus (strain ATCC BAA-491 / LMD-9).